The sequence spans 124 residues: Holo-[acyl-carrier-protein] synthase (124 aa).

The Mg(2+) site is built by Asp-7 and Glu-55.

The protein belongs to the P-Pant transferase superfamily. AcpS family. Mg(2+) is required as a cofactor.

It is found in the cytoplasm. The catalysed reaction is apo-[ACP] + CoA = holo-[ACP] + adenosine 3',5'-bisphosphate + H(+). In terms of biological role, transfers the 4'-phosphopantetheine moiety from coenzyme A to a Ser of acyl-carrier-protein. The sequence is that of Holo-[acyl-carrier-protein] synthase from Borrelia garinii subsp. bavariensis (strain ATCC BAA-2496 / DSM 23469 / PBi) (Borreliella bavariensis).